The sequence spans 110 residues: Transmembrane protein 233 (110 aa).

The disordered stretch occupies residues Met1–Ile32. The Cytoplasmic portion of the chain corresponds to Met1–Thr42. A compositionally biased stretch (acidic residues) spans Tyr22–Ile32. An intramembrane region (helical) is located at residues Ile43–Met63. The Cytoplasmic segment spans residues Ser64 to Trp85. A helical membrane pass occupies residues Val86 to Phe106. Topologically, residues Ser107 to Pro110 are extracellular.

This sequence belongs to the CD225/Dispanin family. Interacts with the giant stinging tree toxin ExTxA (P0DQP3). Interacts with Nav1.7/SCN9A. Interacts with Nav1.1/SCN1A, Nav1.2/SCN2A, Nav1.3/SCN3A, Nav1.4/SCN4A, Nav1.5/SCN5A, and Nav1.6/SCN8A. In terms of tissue distribution, probably expressed in nociceptive neurons. Detected in dorsal root ganglion neurons.

The protein localises to the membrane. In terms of biological role, probable accessory protein of voltage-gated sodium channels. This Mus musculus (Mouse) protein is Transmembrane protein 233.